Consider the following 332-residue polypeptide: HPr kinase/phosphorylase (332 aa).

Catalysis depends on residues H153 and K174. An ATP-binding site is contributed by 168 to 175 (GKSGLGKS). S175 lines the Mg(2+) pocket. D192 (proton acceptor; for phosphorylation activity. Proton donor; for dephosphorylation activity) is an active-site residue. Positions 217–226 (MEIRGLGVVD) are important for the catalytic mechanism of both phosphorylation and dephosphorylation. E218 is a Mg(2+) binding site. R259 is an active-site residue. An important for the catalytic mechanism of dephosphorylation region spans residues 280-285 (PIFPGK).

It belongs to the HPrK/P family. Homohexamer. It depends on Mg(2+) as a cofactor.

It catalyses the reaction [HPr protein]-L-serine + ATP = [HPr protein]-O-phospho-L-serine + ADP + H(+). It carries out the reaction [HPr protein]-O-phospho-L-serine + phosphate + H(+) = [HPr protein]-L-serine + diphosphate. Functionally, catalyzes the ATP- as well as the pyrophosphate-dependent phosphorylation of a specific serine residue in HPr, a phosphocarrier protein of the phosphoenolpyruvate-dependent sugar phosphotransferase system (PTS). HprK/P also catalyzes the pyrophosphate-producing, inorganic phosphate-dependent dephosphorylation (phosphorolysis) of seryl-phosphorylated HPr (P-Ser-HPr). This is HPr kinase/phosphorylase from Chlorobium phaeovibrioides (strain DSM 265 / 1930) (Prosthecochloris vibrioformis (strain DSM 265)).